The chain runs to 997 residues: Protein translocase subunit SecA (997 aa).

Residues glutamine 102, 120 to 124 (GEGKT), and aspartate 521 contribute to the ATP site. The tract at residues 893 to 997 (PADASPNGVV…KYKKCHGAEA (105 aa)) is disordered. Residues 938–953 (AIEREFEKKKQQELSH) are compositionally biased toward basic and acidic residues. Zn(2+)-binding residues include cysteine 981, cysteine 983, cysteine 992, and histidine 993. Residues 987–997 (KKYKKCHGAEA) show a composition bias toward basic residues.

It belongs to the SecA family. As to quaternary structure, monomer and homodimer. Part of the essential Sec protein translocation apparatus which comprises SecA, SecYEG and auxiliary proteins SecDF. Other proteins may also be involved. It depends on Zn(2+) as a cofactor.

Its subcellular location is the cell inner membrane. It localises to the cytoplasm. The catalysed reaction is ATP + H2O + cellular proteinSide 1 = ADP + phosphate + cellular proteinSide 2.. In terms of biological role, part of the Sec protein translocase complex. Interacts with the SecYEG preprotein conducting channel. Has a central role in coupling the hydrolysis of ATP to the transfer of proteins into and across the cell membrane, serving as an ATP-driven molecular motor driving the stepwise translocation of polypeptide chains across the membrane. This chain is Protein translocase subunit SecA, found in Acidobacterium capsulatum (strain ATCC 51196 / DSM 11244 / BCRC 80197 / JCM 7670 / NBRC 15755 / NCIMB 13165 / 161).